Consider the following 467-residue polypeptide: Mitochondrial adenyl nucleotide antiporter SLC25A23 (467 aa).

The regulatory N-terminal domain stretch occupies residues 1 to 148 (MRGGSSDAER…DHFLLHSLEN (148 aa)). Topologically, residues 1-187 (MRGGSSDAER…EKLTGMWWKQ (187 aa)) are mitochondrial intermembrane. EF-hand domains follow at residues 9-44 (ERRQ…LGRG), 76-111 (EREQ…LGIS), and 112-147 (ISLE…HSLE). Residues D22, N24, D26, R28, and E33 each coordinate Ca(2+). The segment at 39–61 (ARLGRGDPDRAQQGVSSDWDADP) is disordered. 5 residues coordinate Ca(2+): D89, N91, D93, H95, and E100. The interval 149-158 (VEDVLYFWKH) is linker region. The interval 164–467 (IGECLTVPDE…MKQALGVTSR (304 aa)) is C-terminal transmembrane transporter domain. Solcar repeat units lie at residues 182 to 268 (GMWW…IKRA), 276 to 361 (LHVQ…LKNR), and 373 to 461 (PGIL…MKQA). Residues 188 to 205 (LVAGAVAGAVSRTGTAPL) traverse the membrane as a helical segment. Residues 206 to 242 (DRLKVFMQVHASKSNRLNILGGLRNMIQEGGVLSLWR) lie on the Mitochondrial matrix side of the membrane. The chain crosses the membrane as a helical span at residues 243-262 (GNGINVLKIAPESAIKFMAY). Over 263–285 (EQIKRAIRGQQETLHVQERFVAG) the chain is Mitochondrial intermembrane. A helical membrane pass occupies residues 286 to 299 (SLAGATAQTIIYPM). The Mitochondrial matrix segment spans residues 300–335 (EVLKTRLTLRRTGQYKGLLDCAKRILEREGPRAFYR). The chain crosses the membrane as a helical span at residues 336-355 (GYLPNVLGIIPYAGIDLAVY). Over 356–378 (ETLKNRWLQQYSHESANPGILVL) the chain is Mitochondrial intermembrane. The chain crosses the membrane as a helical span at residues 379-396 (LGCGTISSTCGQIASYPL). At 397–435 (ALVRTRMQAQASIEGGPQVSMVGLLRHILSQEGVWGLYR) the chain is on the mitochondrial matrix side. A helical transmembrane segment spans residues 436 to 455 (GIAPNFMKVIPAVSISYVVY). The Mitochondrial intermembrane segment spans residues 456 to 467 (ENMKQALGVTSR).

The protein belongs to the mitochondrial carrier (TC 2.A.29) family. In terms of assembly, interacts with MCU. Interacts with MICU1.

The protein localises to the mitochondrion inner membrane. The enzyme catalyses Mg(2+)(out) + phosphate(in) + ATP(out) = Mg(2+)(in) + phosphate(out) + ATP(in). The catalysed reaction is ADP(out) + phosphate(in) + H(+)(out) = ADP(in) + phosphate(out) + H(+)(in). It carries out the reaction AMP(out) + phosphate(in) = AMP(in) + phosphate(out). It catalyses the reaction phosphate(in) + ATP(out) + 2 H(+)(out) = phosphate(out) + ATP(in) + 2 H(+)(in). The enzyme catalyses dADP(in) + ADP(out) = dADP(out) + ADP(in). The catalysed reaction is Mg(2+)(in) + ADP(out) + ATP(in) + H(+)(out) = Mg(2+)(out) + ADP(in) + ATP(out) + H(+)(in). It carries out the reaction ADP(out) + diphosphate(in) = ADP(in) + diphosphate(out). It catalyses the reaction dAMP(in) + ADP(out) + H(+)(out) = dAMP(out) + ADP(in) + H(+)(in). The enzyme catalyses 3'-AMP(in) + ADP(out) + H(+)(out) = 3'-AMP(out) + ADP(in) + H(+)(in). The catalysed reaction is dAMP(out) + phosphate(in) = dAMP(in) + phosphate(out). It carries out the reaction 3'-AMP(out) + phosphate(in) = 3'-AMP(in) + phosphate(out). It catalyses the reaction dADP(out) + phosphate(in) + H(+)(out) = dADP(in) + phosphate(out) + H(+)(in). Activated by an increase in cytosolic calcium levels that induce a conformational change of the N-terminal regulatory domain, uncapping the channel and allowing transport. Functionally, electroneutral antiporter that mediates the transport of adenine nucleotides through the inner mitochondrial membrane. Originally identified as an ATP-magnesium/inorganic phosphate antiporter, it also acts as a broad specificity adenyl nucleotide antiporter. By regulating the mitochondrial matrix adenine nucleotide pool could adapt to changing cellular energetic demands and indirectly regulate adenine nucleotide-dependent metabolic pathways. Also acts as a regulator of mitochondrial calcium uptake and can probably transport trace amounts of other divalent metal cations in complex with ATP. In vitro, a low activity is also observed with guanyl and pyrimidine nucleotides. This chain is Mitochondrial adenyl nucleotide antiporter SLC25A23, found in Mus musculus (Mouse).